Consider the following 409-residue polypeptide: Na(+)-translocating NADH-quinone reductase subunit F (409 aa).

The helical transmembrane segment at 5–25 (FIFGIGAFTAIVLVLAVVILI) threads the bilayer. The 2Fe-2S ferredoxin-type domain occupies 34 to 128 (GDITISINND…SMDVELPEEV (95 aa)). Residues C71, C77, C80, and C112 each contribute to the [2Fe-2S] cluster site. The region spanning 131-271 (VKKWECTVIS…SGPFGEFFAK (141 aa)) is the FAD-binding FR-type domain.

The protein belongs to the NqrF family. As to quaternary structure, composed of six subunits; NqrA, NqrB, NqrC, NqrD, NqrE and NqrF. The cofactor is [2Fe-2S] cluster. It depends on FAD as a cofactor.

It is found in the cell inner membrane. The catalysed reaction is a ubiquinone + n Na(+)(in) + NADH + H(+) = a ubiquinol + n Na(+)(out) + NAD(+). NQR complex catalyzes the reduction of ubiquinone-1 to ubiquinol by two successive reactions, coupled with the transport of Na(+) ions from the cytoplasm to the periplasm. The first step is catalyzed by NqrF, which accepts electrons from NADH and reduces ubiquinone-1 to ubisemiquinone by a one-electron transfer pathway. In Mannheimia succiniciproducens (strain KCTC 0769BP / MBEL55E), this protein is Na(+)-translocating NADH-quinone reductase subunit F.